The following is a 188-amino-acid chain: Ribosome-recycling factor (188 aa).

This sequence belongs to the RRF family.

It is found in the cytoplasm. In terms of biological role, responsible for the release of ribosomes from messenger RNA at the termination of protein biosynthesis. May increase the efficiency of translation by recycling ribosomes from one round of translation to another. The chain is Ribosome-recycling factor from Cereibacter sphaeroides (strain ATCC 17023 / DSM 158 / JCM 6121 / CCUG 31486 / LMG 2827 / NBRC 12203 / NCIMB 8253 / ATH 2.4.1.) (Rhodobacter sphaeroides).